The primary structure comprises 432 residues: Enolase (432 aa).

Glutamine 167 lines the (2R)-2-phosphoglycerate pocket. The Proton donor role is filled by glutamate 209. Residues aspartate 246, glutamate 290, and aspartate 317 each coordinate Mg(2+). Positions 342, 371, 372, and 393 each coordinate (2R)-2-phosphoglycerate. Lysine 342 serves as the catalytic Proton acceptor.

This sequence belongs to the enolase family. As to quaternary structure, component of the RNA degradosome, a multiprotein complex involved in RNA processing and mRNA degradation. Mg(2+) serves as cofactor.

Its subcellular location is the cytoplasm. It is found in the secreted. It localises to the cell surface. It carries out the reaction (2R)-2-phosphoglycerate = phosphoenolpyruvate + H2O. The protein operates within carbohydrate degradation; glycolysis; pyruvate from D-glyceraldehyde 3-phosphate: step 4/5. Catalyzes the reversible conversion of 2-phosphoglycerate (2-PG) into phosphoenolpyruvate (PEP). It is essential for the degradation of carbohydrates via glycolysis. The sequence is that of Enolase from Shigella sonnei (strain Ss046).